Reading from the N-terminus, the 271-residue chain is Undecaprenyl-diphosphatase (271 aa).

The next 8 membrane-spanning stretches (helical) occupy residues 5–25 (YALFVAFVLGIVEGLTEFLPV), 45–65 (AATFEVVIQMGSILAVVAVFW), 86–106 (TLSLVHIILGMLPAVIIGLAI), 114–134 (LFGPQTVMYALVAGGILLIIA), 149–169 (ISYKQALGIGLFQCLALWPGF), 189–209 (AAEFSFILAVPMMVAASGLDL), 226–246 (VGFITAFVVAMIAIKTFLALI), and 251–271 (FIPFAIYRFVVAFAVYLVFVA).

The protein belongs to the UppP family.

The protein resides in the cell inner membrane. The catalysed reaction is di-trans,octa-cis-undecaprenyl diphosphate + H2O = di-trans,octa-cis-undecaprenyl phosphate + phosphate + H(+). Functionally, catalyzes the dephosphorylation of undecaprenyl diphosphate (UPP). Confers resistance to bacitracin. The sequence is that of Undecaprenyl-diphosphatase from Aeromonas hydrophila subsp. hydrophila (strain ATCC 7966 / DSM 30187 / BCRC 13018 / CCUG 14551 / JCM 1027 / KCTC 2358 / NCIMB 9240 / NCTC 8049).